A 22-amino-acid chain; its full sequence is ESQKVQGDVIGVDLGTTYSCVA.

It belongs to the heat shock protein 70 family.

It is found in the mitochondrion. This Leishmania tarentolae (Sauroleishmania tarentolae) protein is Heat shock 70-related protein 1, mitochondrial.